We begin with the raw amino-acid sequence, 151 residues long: Sigma factor binding protein 1, chloroplastic (151 aa).

Positions 1 to 13 (MESSSSTFLTTTS) are enriched in low complexity. Disordered regions lie at residues 1-41 (MESS…KPIK) and 66-93 (TGQDAVDLQPEPIYSPSSDDHNLSPPAE). A chloroplast-targeting transit peptide spans 1–54 (MESSSSTFLTTTSLDKKKPSPVSRKSPKQKKKTTSTNKPIKVRYISNPMRVQTC). A Bipartite nuclear localization signal motif is present at residues 16–32 (KKKPSPVSRKSPKQKKK). The VQ signature appears at 58-67 (FRELVQELTG).

As to quaternary structure, interacts with the sigma factor SIGA in chloroplast. Interacts with WRKY25 and WRKY33 in the nucleus. Expressed in leaves and roots, but not in flowers.

Its subcellular location is the plastid. The protein localises to the chloroplast. The protein resides in the nucleus. Its function is as follows. Contributes to plant defense. May regulate chloroplast metabolism upon infection with pathogens such as Pseudomonas syringae. Functions as activator of WRKY33 in plant defense against necrotrophic pathogens by stimulating the DNA-binding activity of WRKY33. This Arabidopsis thaliana (Mouse-ear cress) protein is Sigma factor binding protein 1, chloroplastic (SIB1).